The sequence spans 523 residues: Probable glucose-1-phosphate adenylyltransferase large subunit, chloroplastic (523 aa).

The protein belongs to the bacterial/plant glucose-1-phosphate adenylyltransferase family. As to quaternary structure, heterotetramer.

The protein resides in the plastid. It is found in the chloroplast. It carries out the reaction alpha-D-glucose 1-phosphate + ATP + H(+) = ADP-alpha-D-glucose + diphosphate. Its pathway is glycan biosynthesis; starch biosynthesis. Activated by 3'phosphoglycerate, inhibited by orthophosphate. Allosteric regulation. Its function is as follows. This protein plays a role in synthesis of starch. It catalyzes the synthesis of the activated glycosyl donor, ADP-glucose from Glc-1-P and ATP. This Arabidopsis thaliana (Mouse-ear cress) protein is Probable glucose-1-phosphate adenylyltransferase large subunit, chloroplastic.